The chain runs to 71 residues: Small ribosomal subunit protein bS18 (71 aa).

This sequence belongs to the bacterial ribosomal protein bS18 family. In terms of assembly, part of the 30S ribosomal subunit. Forms a tight heterodimer with protein bS6.

In terms of biological role, binds as a heterodimer with protein bS6 to the central domain of the 16S rRNA, where it helps stabilize the platform of the 30S subunit. The chain is Small ribosomal subunit protein bS18 from Nostoc sp. (strain PCC 7120 / SAG 25.82 / UTEX 2576).